A 325-amino-acid chain; its full sequence is uncharacterized protein (325 aa).

Residues 1–75 (MSQPPEHPGN…PPPGYPTHLQ (75 aa)) form a disordered region. Composition is skewed to pro residues over residues 24-39 (YPPP…PGYG) and 50-70 (YNAP…PPGY). The next 4 helical transmembrane spans lie at 96 to 116 (AVTL…VIGA), 153 to 173 (IVMF…HAGI), 205 to 225 (LLIV…GLIF), and 273 to 293 (LVGE…AALI).

It localises to the cell membrane. This is an uncharacterized protein from Mycobacterium tuberculosis (strain CDC 1551 / Oshkosh).